We begin with the raw amino-acid sequence, 224 residues long: ATP-dependent dethiobiotin synthetase BioD (224 aa).

13 to 18 contributes to the ATP binding site; sequence NVGKTI. A Mg(2+)-binding site is contributed by Thr-17. Lys-38 is a catalytic residue. Substrate is bound at residue Ser-42. ATP-binding positions include Asp-55, 116–119, 176–177, and Asn-211; these read EGAG and NN. Positions 55 and 116 each coordinate Mg(2+).

The protein belongs to the dethiobiotin synthetase family. In terms of assembly, homodimer. Mg(2+) serves as cofactor.

It localises to the cytoplasm. The catalysed reaction is (7R,8S)-7,8-diammoniononanoate + CO2 + ATP = (4R,5S)-dethiobiotin + ADP + phosphate + 3 H(+). The protein operates within cofactor biosynthesis; biotin biosynthesis; biotin from 7,8-diaminononanoate: step 1/2. Functionally, catalyzes a mechanistically unusual reaction, the ATP-dependent insertion of CO2 between the N7 and N8 nitrogen atoms of 7,8-diaminopelargonic acid (DAPA, also called 7,8-diammoniononanoate) to form a ureido ring. This chain is ATP-dependent dethiobiotin synthetase BioD, found in Buchnera aphidicola subsp. Acyrthosiphon pisum (strain 5A).